The chain runs to 165 residues: Nucleotide-binding protein Tfu_2672 (165 aa).

This sequence belongs to the YajQ family.

In terms of biological role, nucleotide-binding protein. In Thermobifida fusca (strain YX), this protein is Nucleotide-binding protein Tfu_2672.